The sequence spans 199 residues: Translation machinery-associated protein 22 (199 aa).

Residues 97 to 168 enclose the SUI1 domain; it reads VVIRREARTK…EVEAYIHALL (72 aa).

The protein belongs to the DENR family. Interacts with the 40S ribosomal subunit.

It localises to the cytoplasm. The protein is Translation machinery-associated protein 22 (TMA22) of Eremothecium gossypii (strain ATCC 10895 / CBS 109.51 / FGSC 9923 / NRRL Y-1056) (Yeast).